Consider the following 529-residue polypeptide: UDP-glucuronosyltransferase 2B11 (529 aa).

Positions Met1–Gly21 are cleaved as a signal peptide. Position 135 is an N6-succinyllysine (Lys135). A glycan (N-linked (GlcNAc...) asparagine) is linked at Asn315. The chain crosses the membrane as a helical span at residues Val493–Leu513.

This sequence belongs to the UDP-glycosyltransferase family. Widely expressed.

It is found in the microsome membrane. The protein localises to the endoplasmic reticulum membrane. It carries out the reaction glucuronate acceptor + UDP-alpha-D-glucuronate = acceptor beta-D-glucuronoside + UDP + H(+). In terms of biological role, UDPGT is of major importance in the conjugation and subsequent elimination of potentially toxic xenobiotics and endogenous compounds. This is UDP-glucuronosyltransferase 2B11 (UGT2B11) from Homo sapiens (Human).